A 278-amino-acid chain; its full sequence is Short-chain dehydrogenase RED2 (278 aa).

NADP(+) is bound by residues isoleucine 15, aspartate 70, arginine 132, tyrosine 178, lysine 182, valine 211, and threonine 213. Tyrosine 178 functions as the Proton donor in the catalytic mechanism. Lysine 182 functions as the Lowers pKa of active site Tyr in the catalytic mechanism.

Belongs to the short-chain dehydrogenases/reductases (SDR) family.

It participates in polyketide biosynthesis. Its function is as follows. Short-chain dehydrogenase; part of the gene cluster that mediates the biosynthesis of pyriculol and pyriculariol, two heptaketides that induce lesion formation upon application on rice leaves but are dispensable for pathogenicity. The highly reducing polyketide synthase synthesizes the heptaketide backbone of pyriculol and pyriculariol. Pyriculol and pyriculariol contain several hydroxyl moieties and double bonds, so it can be assumed that several reduction steps occur during biosynthesis. These reactions could be executed by PKS19 itself or partly by the tailoring enzymes OXR1, OXR2, RED1, RED2 or RED3, identified within the cluster. The FAD-linked oxidoreductase OXR1 is the only tailoring enzyme for which the function has been determined yet, and is involved in the oxidation of dihydropyriculol and dihydropyriculariol into pyriculol and pyriculariol, respectively. The protein is Short-chain dehydrogenase RED2 of Pyricularia oryzae (strain 70-15 / ATCC MYA-4617 / FGSC 8958) (Rice blast fungus).